The sequence spans 219 residues: N-(5'-phosphoribosyl)anthranilate isomerase (219 aa).

It belongs to the TrpF family.

The enzyme catalyses N-(5-phospho-beta-D-ribosyl)anthranilate = 1-(2-carboxyphenylamino)-1-deoxy-D-ribulose 5-phosphate. Its pathway is amino-acid biosynthesis; L-tryptophan biosynthesis; L-tryptophan from chorismate: step 3/5. The sequence is that of N-(5'-phosphoribosyl)anthranilate isomerase from Dehalococcoides mccartyi (strain ATCC BAA-2266 / KCTC 15142 / 195) (Dehalococcoides ethenogenes (strain 195)).